Reading from the N-terminus, the 366-residue chain is Spermine synthase (366 aa).

Alanine 2 carries the N-acetylalanine modification. The residue at position 57 (serine 57) is a Phosphoserine. In terms of domain architecture, PABS spans 122–362; that stretch reads RYWPTADGRL…ELWVFYTVWK (241 aa). Residue glutamine 148 participates in S-adenosyl 3-(methylsulfanyl)propylamine binding. Residues tyrosine 177 and aspartate 201 each coordinate spermidine. Residues glutamate 220 and 255–256 each bind S-adenosyl 3-(methylsulfanyl)propylamine; that span reads DC. The active-site Proton acceptor is the aspartate 276. Residues tyrosine 351 and glutamate 353 each contribute to the spermidine site.

The protein belongs to the spermidine/spermine synthase family. In terms of assembly, homodimer. Dimerization is mediated through the N-terminal domain and seems to be required for activity as deletion of the N-terminal domain causes complete loss of activity.

It catalyses the reaction S-adenosyl 3-(methylsulfanyl)propylamine + spermidine = spermine + S-methyl-5'-thioadenosine + H(+). The protein operates within amine and polyamine biosynthesis; spermine biosynthesis; spermine from spermidine: step 1/1. Functionally, catalyzes the production of spermine from spermidine and decarboxylated S-adenosylmethionine (dcSAM). The sequence is that of Spermine synthase from Homo sapiens (Human).